Consider the following 545-residue polypeptide: E3 ubiquitin-protein ligase ipaH9.8 (545 aa).

An interaction with target proteins region spans residues Met1–Met242. LRR repeat units follow at residues Asn57–Ala77, Gln78–Leu99, Lys100–Pro117, Ala118–Leu139, Leu140–Leu157, Ala158–Asn179, Val182–Leu203, and Asn205–Thr228. The linker stretch occupies residues Ser243–Leu250. Residues His251–Ser545 form an E3 ubiquitin-protein ligase catalytic domain region. The NEL domain maps to Pro253–Ser545. The active-site Glycyl thioester intermediate is the Cys337.

Belongs to the LRR-containing bacterial E3 ligase family. As to quaternary structure, also interacts with human and mouse U2AF1 (U2AF35). In terms of processing, ubiquitinated in the presence of host E1 ubiquitin-activating enzyme, E2 ubiquitin-conjugating enzyme and ubiquitin.

It is found in the secreted. The protein resides in the host cytoplasm. It localises to the host nucleus. The catalysed reaction is S-ubiquitinyl-[E2 ubiquitin-conjugating enzyme]-L-cysteine + [acceptor protein]-L-lysine = [E2 ubiquitin-conjugating enzyme]-L-cysteine + N(6)-ubiquitinyl-[acceptor protein]-L-lysine.. Its activity is regulated as follows. Exists in an autoinhibited state in the absence of substrate protein, due to interactions of the leucine-rich repeats with NEL domain. Is activated upon binding to a substrate protein. In terms of biological role, effector E3 ubiquitin ligase that interferes with host's ubiquitination pathway and modulates the acute inflammatory responses, thus facilitating bacterial colonization within the host cell. Interacts with IKBKG (NEMO) and TNIP1 (ABIN-1), a ubiquitin-binding adapter protein, which results in TNIP1-dependent 'Lys-27'-linked polyubiquitination of IKBKG. Consequently, polyubiquitinated IKBKG undergoes proteasome-dependent degradation, which perturbs NF-kappa-B activation during bacterial infection. Mediates polyubiquitination of host U2AF1, leading to its proteasomal degradation. Catalyzes 'Lys-48'-linked polyubiquitination and subsequent degradation of a subset of host guanylate-binding proteins (GBP1, GBP2, GBP4 and GBP6), thereby suppressing host cell defense. In contrast, host GBP3 and GBP7 are not ubiquitinated by IpaH9.8. Uses UBE2D2 (UBCH5B) as an E2 ubiquitin-conjugating enzyme. This chain is E3 ubiquitin-protein ligase ipaH9.8 (ipaH9.8), found in Shigella boydii serotype 4 (strain Sb227).